Here is a 341-residue protein sequence, read N- to C-terminus: MPRPFFHKLIFSSTIQEKRLRVPDKFVSKFKDELSVAVALTVPDGHVWRVGLRKADNKIWFQDGWQEFVDRYSIRIGYLLIFRYEGNSAFSVYIFNLSHSEINYHSTGLMDSAHNHFKRARLFEDLEDEDAEVIFPSSVYPSPLPESTVPANKGYASSAIQTLFTGPVKAEEPTPTPKIPKKRGRKKKNADPEEINSSAPRDDDPENRSKFYESASARKRTVTAEERERAINAAKTFEPTNPFFRVVLRPSYLYRGCIMYLPSGFAEKYLSGISGFIKVQLAEKQWPVRCLYKAGRAKFSQGWYEFTLENNLGEGDVCVFELLRTRDFVLKVTAFRVNEYV.

A DNA-binding region (TF-B3 1) is located at residues 5-98 (FFHKLIFSST…AFSVYIFNLS (94 aa)). The interval 166–223 (GPVKAEEPTPTPKIPKKRGRKKKNADPEEINSSAPRDDDPENRSKFYESASARKRTVT) is disordered. Over residues 179 to 188 (IPKKRGRKKK) the composition is skewed to basic residues. A compositionally biased stretch (basic and acidic residues) spans 200–211 (PRDDDPENRSKF). Residues 244 to 338 (FRVVLRPSYL…VLKVTAFRVN (95 aa)) constitute a DNA-binding region (TF-B3 2).

Expressed in roots and at lower levels in aerial parts.

The protein resides in the nucleus. Functionally, essential protein. Involved in the regulation of vernalization. Acts as a transcriptional repressor of FLC, a major target of the vernalization pathway. Binds DNA in vitro in a non-sequence-specific manner. The sequence is that of B3 domain-containing transcription factor VRN1 from Arabidopsis thaliana (Mouse-ear cress).